The chain runs to 194 residues: Probable RNA 2'-phosphotransferase (194 aa).

The protein belongs to the KptA/TPT1 family.

Removes the 2'-phosphate from RNA via an intermediate in which the phosphate is ADP-ribosylated by NAD followed by a presumed transesterification to release the RNA and generate ADP-ribose 1''-2''-cyclic phosphate (APPR&gt;P). May function as an ADP-ribosylase. In Burkholderia lata (strain ATCC 17760 / DSM 23089 / LMG 22485 / NCIMB 9086 / R18194 / 383), this protein is Probable RNA 2'-phosphotransferase.